We begin with the raw amino-acid sequence, 261 residues long: 2,3-dihydro-2,3-dihydroxybenzoate dehydrogenase (261 aa).

12 to 36 is an NAD(+) binding site; sequence FITGAAQGIGEAVARTLASQGAHIA. Ser-144 is a binding site for substrate. Catalysis depends on Tyr-157, which acts as the Proton acceptor.

The protein belongs to the short-chain dehydrogenases/reductases (SDR) family.

The protein resides in the cytoplasm. The catalysed reaction is (2S,3S)-2,3-dihydroxy-2,3-dihydrobenzoate + NAD(+) = 2,3-dihydroxybenzoate + NADH + H(+). The protein operates within siderophore biosynthesis; bacillibactin biosynthesis. In Bacillus subtilis (strain 168), this protein is 2,3-dihydro-2,3-dihydroxybenzoate dehydrogenase (dhbA).